Here is a 105-residue protein sequence, read N- to C-terminus: Co-chaperonin GroES (105 aa).

The protein belongs to the GroES chaperonin family. As to quaternary structure, heptamer of 7 subunits arranged in a ring. Interacts with the chaperonin GroEL.

The protein localises to the cytoplasm. In terms of biological role, together with the chaperonin GroEL, plays an essential role in assisting protein folding. The GroEL-GroES system forms a nano-cage that allows encapsulation of the non-native substrate proteins and provides a physical environment optimized to promote and accelerate protein folding. GroES binds to the apical surface of the GroEL ring, thereby capping the opening of the GroEL channel. The protein is Co-chaperonin GroES of Parvibaculum lavamentivorans (strain DS-1 / DSM 13023 / NCIMB 13966).